The sequence spans 489 residues: UDP-N-acetylmuramoylalanine--D-glutamate ligase (489 aa).

126–132 (GTNGKTT) is a binding site for ATP.

The protein belongs to the MurCDEF family.

The protein localises to the cytoplasm. The catalysed reaction is UDP-N-acetyl-alpha-D-muramoyl-L-alanine + D-glutamate + ATP = UDP-N-acetyl-alpha-D-muramoyl-L-alanyl-D-glutamate + ADP + phosphate + H(+). It functions in the pathway cell wall biogenesis; peptidoglycan biosynthesis. Functionally, cell wall formation. Catalyzes the addition of glutamate to the nucleotide precursor UDP-N-acetylmuramoyl-L-alanine (UMA). This is UDP-N-acetylmuramoylalanine--D-glutamate ligase from Mycobacterium avium (strain 104).